The sequence spans 480 residues: Protein nucleotidyltransferase YdiU (480 aa).

Positions 86, 88, 89, 109, 121, 122, 172, and 179 each coordinate ATP. Residue Asp248 is the Proton acceptor of the active site. Positions 249 and 258 each coordinate Mg(2+). An ATP-binding site is contributed by Asp258.

Belongs to the SELO family. The cofactor is Mg(2+). Mn(2+) is required as a cofactor.

The enzyme catalyses L-seryl-[protein] + ATP = 3-O-(5'-adenylyl)-L-seryl-[protein] + diphosphate. It carries out the reaction L-threonyl-[protein] + ATP = 3-O-(5'-adenylyl)-L-threonyl-[protein] + diphosphate. It catalyses the reaction L-tyrosyl-[protein] + ATP = O-(5'-adenylyl)-L-tyrosyl-[protein] + diphosphate. The catalysed reaction is L-histidyl-[protein] + UTP = N(tele)-(5'-uridylyl)-L-histidyl-[protein] + diphosphate. The enzyme catalyses L-seryl-[protein] + UTP = O-(5'-uridylyl)-L-seryl-[protein] + diphosphate. It carries out the reaction L-tyrosyl-[protein] + UTP = O-(5'-uridylyl)-L-tyrosyl-[protein] + diphosphate. Nucleotidyltransferase involved in the post-translational modification of proteins. It can catalyze the addition of adenosine monophosphate (AMP) or uridine monophosphate (UMP) to a protein, resulting in modifications known as AMPylation and UMPylation. The polypeptide is Protein nucleotidyltransferase YdiU (Salmonella heidelberg (strain SL476)).